We begin with the raw amino-acid sequence, 655 residues long: Very long-chain specific acyl-CoA dehydrogenase, mitochondrial (655 aa).

The N-terminal 40 residues, 1-40, are a transit peptide targeting the mitochondrion; the sequence is MQSARMTPSVGRQLLRLGARSSRSAALQGQPRPTSAQRLY. A disordered region spans residues 1–70; the sequence is MQSARMTPSV…TREKPARAES (70 aa). Over residues 21 to 37 the composition is skewed to polar residues; that stretch reads SSRSAALQGQPRPTSAQ. Positions 41 to 482 are catalytic; sequence ASEATQAVLE…ALQGCMDKGK (442 aa). Lys51 carries the post-translational modification N6-acetyllysine. A compositionally biased stretch (basic and acidic residues) spans 60-70; it reads STREKPARAES. 2 positions are modified to N6-acetyllysine; alternate: Lys71 and Lys127. Lys71 and Lys127 each carry N6-succinyllysine; alternate. At Lys195 the chain carries N6-succinyllysine. 214-223 contributes to the FAD binding site; sequence FCLTEPSSGS. Cys237 is modified (S-nitrosocysteine). Lys239 bears the N6-acetyllysine; alternate mark. N6-succinyllysine; alternate is present on Lys239. 249-251 lines the FAD pocket; the sequence is WIS. An N6-succinyllysine modification is found at Lys268. N6-acetyllysine; alternate occurs at positions 276 and 278. 2 positions are modified to N6-succinyllysine; alternate: Lys276 and Lys278. N6-acetyllysine occurs at positions 298 and 316. N6-acetyllysine; alternate is present on Lys331. At Lys331 the chain carries N6-succinyllysine; alternate. At Lys372 the chain carries N6-succinyllysine. A substrate-binding site is contributed by 461 to 463; that stretch reads FEG. Glu462 functions as the Proton acceptor in the catalytic mechanism. Position 464–466 (464–466) interacts with FAD; sequence TND. Lys482 is subject to N6-acetyllysine; alternate. Lys482 bears the N6-succinyllysine; alternate mark. A membrane-anchoring region spans residues 483–516; it reads ELTGLGNALKNPLGNVGLLIGEASKQLRRRTGIG. A phosphoserine mark is found at Ser517 and Ser522. At Lys550 the chain carries N6-acetyllysine. The residue at position 556 (Lys556) is an N6-acetyllysine; alternate. The residue at position 556 (Lys556) is an N6-succinyllysine; alternate. Gln562 provides a ligand contact to FAD. Residue Lys639 is modified to N6-succinyllysine.

It belongs to the acyl-CoA dehydrogenase family. Homodimer. Homodimerizes after import into the mitochondrion. FAD is required as a cofactor. S-nitrosylation at Cys-237 in liver improves catalytic efficiency. Widely expressed (at protein level).

Its subcellular location is the mitochondrion inner membrane. It catalyses the reaction a very-long-chain 2,3-saturated fatty acyl-CoA + oxidized [electron-transfer flavoprotein] + H(+) = a very-long-chain (2E)-enoyl-CoA + reduced [electron-transfer flavoprotein]. The enzyme catalyses dodecanoyl-CoA + oxidized [electron-transfer flavoprotein] + H(+) = (2E)-dodecenoyl-CoA + reduced [electron-transfer flavoprotein]. It carries out the reaction tetradecanoyl-CoA + oxidized [electron-transfer flavoprotein] + H(+) = (2E)-tetradecenoyl-CoA + reduced [electron-transfer flavoprotein]. The catalysed reaction is oxidized [electron-transfer flavoprotein] + hexadecanoyl-CoA + H(+) = (2E)-hexadecenoyl-CoA + reduced [electron-transfer flavoprotein]. It catalyses the reaction octadecanoyl-CoA + oxidized [electron-transfer flavoprotein] + H(+) = (2E)-octadecenoyl-CoA + reduced [electron-transfer flavoprotein]. The enzyme catalyses eicosanoyl-CoA + oxidized [electron-transfer flavoprotein] + H(+) = (2E)-eicosenoyl-CoA + reduced [electron-transfer flavoprotein]. It carries out the reaction docosanoyl-CoA + oxidized [electron-transfer flavoprotein] + H(+) = (2E)-docosenoyl-CoA + reduced [electron-transfer flavoprotein]. The catalysed reaction is tetracosanoyl-CoA + oxidized [electron-transfer flavoprotein] + H(+) = (2E)-tetracosenoyl-CoA + reduced [electron-transfer flavoprotein]. The protein operates within lipid metabolism; mitochondrial fatty acid beta-oxidation. Functionally, very long-chain specific acyl-CoA dehydrogenase is one of the acyl-CoA dehydrogenases that catalyze the first step of mitochondrial fatty acid beta-oxidation, an aerobic process breaking down fatty acids into acetyl-CoA and allowing the production of energy from fats. The first step of fatty acid beta-oxidation consists in the removal of one hydrogen from C-2 and C-3 of the straight-chain fatty acyl-CoA thioester, resulting in the formation of trans-2-enoyl-CoA. Among the different mitochondrial acyl-CoA dehydrogenases, very long-chain specific acyl-CoA dehydrogenase acts specifically on acyl-CoAs with saturated 12 to 24 carbons long primary chains. The sequence is that of Very long-chain specific acyl-CoA dehydrogenase, mitochondrial from Rattus norvegicus (Rat).